We begin with the raw amino-acid sequence, 213 residues long: Ribosomal RNA large subunit methyltransferase E (213 aa).

S-adenosyl-L-methionine contacts are provided by Gly60, Trp62, Asp80, Asp96, and Asp121. Catalysis depends on Lys161, which acts as the Proton acceptor.

It belongs to the class I-like SAM-binding methyltransferase superfamily. RNA methyltransferase RlmE family.

Its subcellular location is the cytoplasm. The catalysed reaction is uridine(2552) in 23S rRNA + S-adenosyl-L-methionine = 2'-O-methyluridine(2552) in 23S rRNA + S-adenosyl-L-homocysteine + H(+). Its function is as follows. Specifically methylates the uridine in position 2552 of 23S rRNA at the 2'-O position of the ribose in the fully assembled 50S ribosomal subunit. This chain is Ribosomal RNA large subunit methyltransferase E, found in Xylella fastidiosa (strain M23).